The primary structure comprises 165 residues: uncharacterized protein (165 aa).

A helical transmembrane segment spans residues 16-36 (ASISSILNFFFFYIMEYFVAV).

It belongs to the asfivirus F165R family.

The protein localises to the host membrane. This is an uncharacterized protein from African swine fever virus (strain Badajoz 1971 Vero-adapted) (Ba71V).